A 173-amino-acid polypeptide reads, in one-letter code: ATP synthase subunit b 1 (173 aa).

The chain crosses the membrane as a helical span at residues 15 to 37; that stretch reads TFWVTVAVLIFLAFFGRKIVGAI.

This sequence belongs to the ATPase B chain family. As to quaternary structure, F-type ATPases have 2 components, F(1) - the catalytic core - and F(0) - the membrane proton channel. F(1) has five subunits: alpha(3), beta(3), gamma(1), delta(1), epsilon(1). F(0) has three main subunits: a(1), b(2) and c(10-14). The alpha and beta chains form an alternating ring which encloses part of the gamma chain. F(1) is attached to F(0) by a central stalk formed by the gamma and epsilon chains, while a peripheral stalk is formed by the delta and b chains.

Its subcellular location is the cell inner membrane. In terms of biological role, f(1)F(0) ATP synthase produces ATP from ADP in the presence of a proton or sodium gradient. F-type ATPases consist of two structural domains, F(1) containing the extramembraneous catalytic core and F(0) containing the membrane proton channel, linked together by a central stalk and a peripheral stalk. During catalysis, ATP synthesis in the catalytic domain of F(1) is coupled via a rotary mechanism of the central stalk subunits to proton translocation. Its function is as follows. Component of the F(0) channel, it forms part of the peripheral stalk, linking F(1) to F(0). This is ATP synthase subunit b 1 from Acidiphilium cryptum (strain JF-5).